The sequence spans 250 residues: Isoprenyl transferase (250 aa).

The active site involves D26. D26 contributes to the Mg(2+) binding site. Substrate is bound by residues 27 to 30 (GNGR), W31, R39, H43, and 71 to 73 (STE). The Proton acceptor role is filled by N74. Substrate contacts are provided by residues W75, R77, R198, and 204 to 206 (RLS). E217 provides a ligand contact to Mg(2+).

It belongs to the UPP synthase family. In terms of assembly, homodimer. Mg(2+) is required as a cofactor.

Catalyzes the condensation of isopentenyl diphosphate (IPP) with allylic pyrophosphates generating different type of terpenoids. In Streptococcus agalactiae serotype III (strain NEM316), this protein is Isoprenyl transferase.